The following is a 323-amino-acid chain: Serpentine receptor class gamma-5 (323 aa).

7 helical membrane-spanning segments follow: residues 31-51 (QLFY…IMLF), 63-83 (FIIF…DLFI), 98-117 (YPLF…IYNY), 151-171 (IPVT…NVII), 193-213 (WASL…ITVF), 245-265 (AAFF…ITAA), and 272-292 (FLQG…MVLI).

It belongs to the nematode receptor-like protein srg family.

It is found in the membrane. The protein is Serpentine receptor class gamma-5 (srg-5) of Caenorhabditis elegans.